Here is a 169-residue protein sequence, read N- to C-terminus: Cell division inhibitor SulA (169 aa).

The ftsZ binding stretch occupies residues 106–112; it reads ALRTGNY. Positions 162–169 are lon protease binding; that stretch reads KIHSNLYH.

The protein belongs to the SulA family. In terms of assembly, interacts with FtsZ. Post-translationally, is rapidly cleaved and degraded by the Lon protease once DNA damage is repaired.

Its function is as follows. Component of the SOS system and an inhibitor of cell division. Accumulation of SulA causes rapid cessation of cell division and the appearance of long, non-septate filaments. In the presence of GTP, binds a polymerization-competent form of FtsZ in a 1:1 ratio, thus inhibiting FtsZ polymerization and therefore preventing it from participating in the assembly of the Z ring. This mechanism prevents the premature segregation of damaged DNA to daughter cells during cell division. This Escherichia coli O81 (strain ED1a) protein is Cell division inhibitor SulA.